The chain runs to 144 residues: Transcriptional regulator MraZ (144 aa).

SpoVT-AbrB domains follow at residues 6–48 and 77–120; these read TYTP…PTDV and ADEG…DPVR.

The protein belongs to the MraZ family. As to quaternary structure, forms oligomers.

Its subcellular location is the cytoplasm. The protein resides in the nucleoid. The chain is Transcriptional regulator MraZ from Nocardioides sp. (strain ATCC BAA-499 / JS614).